We begin with the raw amino-acid sequence, 189 residues long: Peptidyl-tRNA hydrolase (189 aa).

Y14 is a tRNA binding site. H19 serves as the catalytic Proton acceptor. Positions 64, 66, and 112 each coordinate tRNA.

Belongs to the PTH family. In terms of assembly, monomer.

The protein localises to the cytoplasm. The enzyme catalyses an N-acyl-L-alpha-aminoacyl-tRNA + H2O = an N-acyl-L-amino acid + a tRNA + H(+). Its function is as follows. Hydrolyzes ribosome-free peptidyl-tRNAs (with 1 or more amino acids incorporated), which drop off the ribosome during protein synthesis, or as a result of ribosome stalling. In terms of biological role, catalyzes the release of premature peptidyl moieties from peptidyl-tRNA molecules trapped in stalled 50S ribosomal subunits, and thus maintains levels of free tRNAs and 50S ribosomes. This Dehalococcoides mccartyi (strain ATCC BAA-2266 / KCTC 15142 / 195) (Dehalococcoides ethenogenes (strain 195)) protein is Peptidyl-tRNA hydrolase.